Here is a 1043-residue protein sequence, read N- to C-terminus: Unconventional myosin-Ia (1043 aa).

A Myosin motor domain is found at 8-694; sequence VGVEDLILLE…TLFYLEEQRR (687 aa). Residue 101–108 participates in ATP binding; the sequence is GESGAGKT. Residues 571 to 593 are actin-binding; that stretch reads VAVLMKNLYSKNPNYIRCIKPND. IQ domains are found at residues 697–719, 720–742, and 743–772; these read LQQL…HYQQ, MRKS…HYGK, and IRSS…SGAA. In terms of domain architecture, TH1 spans 858 to 1042; that stretch reads KASYPQSVPI…KGSNAMEVTV (185 aa).

Belongs to the TRAFAC class myosin-kinesin ATPase superfamily. Myosin family. Phosphorylated by ALPK1.

Functionally, involved in directing the movement of organelles along actin filaments. The sequence is that of Unconventional myosin-Ia (Myo1a) from Mus musculus (Mouse).